The chain runs to 103 residues: uncharacterized protein (103 aa).

The disordered stretch occupies residues 1–103 (MAGARRRARC…WRGGSCTSQR (103 aa)). 2 stretches are compositionally biased toward basic residues: residues 55–65 (RRPGPGRRARS) and 74–84 (RPPHSRTRARR).

The protein belongs to the epstein-barr virus RPMS1 family.

This is an uncharacterized protein from Epstein-Barr virus (strain GD1) (HHV-4).